Here is a 155-residue protein sequence, read N- to C-terminus: Ribosomal RNA large subunit methyltransferase H (155 aa).

Residues Leu73, Gly104, and Leu123 to Leu128 contribute to the S-adenosyl-L-methionine site.

It belongs to the RNA methyltransferase RlmH family. As to quaternary structure, homodimer.

Its subcellular location is the cytoplasm. It carries out the reaction pseudouridine(1915) in 23S rRNA + S-adenosyl-L-methionine = N(3)-methylpseudouridine(1915) in 23S rRNA + S-adenosyl-L-homocysteine + H(+). Its function is as follows. Specifically methylates the pseudouridine at position 1915 (m3Psi1915) in 23S rRNA. This chain is Ribosomal RNA large subunit methyltransferase H, found in Azotobacter vinelandii (strain DJ / ATCC BAA-1303).